Reading from the N-terminus, the 185-residue chain is Acireductone dioxygenase (185 aa).

The disordered stretch occupies residues 1–23; that stretch reads MSRLSIHPEGNTNATSPAEPLLE. The Fe(2+) site is built by H102, H104, E108, and H146. 4 residues coordinate Ni(2+): H102, H104, E108, and H146.

This sequence belongs to the acireductone dioxygenase (ARD) family. Monomer. It depends on Fe(2+) as a cofactor. Requires Ni(2+) as cofactor.

The enzyme catalyses 1,2-dihydroxy-5-(methylsulfanyl)pent-1-en-3-one + O2 = 3-(methylsulfanyl)propanoate + CO + formate + 2 H(+). It catalyses the reaction 1,2-dihydroxy-5-(methylsulfanyl)pent-1-en-3-one + O2 = 4-methylsulfanyl-2-oxobutanoate + formate + 2 H(+). It functions in the pathway amino-acid biosynthesis; L-methionine biosynthesis via salvage pathway; L-methionine from S-methyl-5-thio-alpha-D-ribose 1-phosphate: step 5/6. In terms of biological role, catalyzes 2 different reactions between oxygen and the acireductone 1,2-dihydroxy-3-keto-5-methylthiopentene (DHK-MTPene) depending upon the metal bound in the active site. Fe-containing acireductone dioxygenase (Fe-ARD) produces formate and 2-keto-4-methylthiobutyrate (KMTB), the alpha-ketoacid precursor of methionine in the methionine recycle pathway. Ni-containing acireductone dioxygenase (Ni-ARD) produces methylthiopropionate, carbon monoxide and formate, and does not lie on the methionine recycle pathway. The polypeptide is Acireductone dioxygenase (Prochlorococcus marinus (strain MIT 9303)).